A 1106-amino-acid chain; its full sequence is Protein translocase subunit SecA (1106 aa).

ATP-binding positions include Q175, 193–197 (GEGKT), and D694. The tract at residues 1021–1106 (QEAPADEQQP…KYKNCHGQNA (86 aa)) is disordered. Over residues 1042-1056 (QRQDMSKYREQKQDL) the composition is skewed to basic and acidic residues. Residues 1057 to 1067 (SDPNQQAAASQ) are compositionally biased toward polar residues. Over residues 1068-1085 (DTREQQKREPIRAEKTVG) the composition is skewed to basic and acidic residues. 4 residues coordinate Zn(2+): C1090, C1092, C1101, and H1102.

This sequence belongs to the SecA family. As to quaternary structure, monomer and homodimer. Part of the essential Sec protein translocation apparatus which comprises SecA, SecYEG and auxiliary proteins SecDF. Other proteins may also be involved. It depends on Zn(2+) as a cofactor.

It localises to the cell inner membrane. Its subcellular location is the cytoplasm. The catalysed reaction is ATP + H2O + cellular proteinSide 1 = ADP + phosphate + cellular proteinSide 2.. In terms of biological role, part of the Sec protein translocase complex. Interacts with the SecYEG preprotein conducting channel. Has a central role in coupling the hydrolysis of ATP to the transfer of proteins into and across the cell membrane, serving as an ATP-driven molecular motor driving the stepwise translocation of polypeptide chains across the membrane. The sequence is that of Protein translocase subunit SecA from Bacteroides thetaiotaomicron (strain ATCC 29148 / DSM 2079 / JCM 5827 / CCUG 10774 / NCTC 10582 / VPI-5482 / E50).